Consider the following 112-residue polypeptide: Small ribosomal subunit protein bS6 (112 aa).

It belongs to the bacterial ribosomal protein bS6 family.

Functionally, binds together with bS18 to 16S ribosomal RNA. In Azobacteroides pseudotrichonymphae genomovar. CFP2, this protein is Small ribosomal subunit protein bS6.